An 89-amino-acid polypeptide reads, in one-letter code: MVDKTQGIIDPPIDELLSKVDSKYALVIFASKRARQINDYYADLHEGSLFDNVGPLVDSTIDDKPLSVAMHEINEDKLVATPIVEPAAS.

It belongs to the RNA polymerase subunit omega family. As to quaternary structure, the RNAP catalytic core consists of 2 alpha, 1 beta, 1 beta' and 1 omega subunit. When a sigma factor is associated with the core the holoenzyme is formed, which can initiate transcription.

It carries out the reaction RNA(n) + a ribonucleoside 5'-triphosphate = RNA(n+1) + diphosphate. In terms of biological role, promotes RNA polymerase assembly. Latches the N- and C-terminal regions of the beta' subunit thereby facilitating its interaction with the beta and alpha subunits. In Clavibacter michiganensis subsp. michiganensis (strain NCPPB 382), this protein is DNA-directed RNA polymerase subunit omega.